A 468-amino-acid polypeptide reads, in one-letter code: MSENNNKIPSFGLKSNVNSTYNHLETVAKLSIDEKLVNEPPKFVDIKTITPLNVENNGIAQKRIISKRDLRSFHTSSTYSELLNFIIQLSLDIQGKSLKSNFTITKNINSIIVLLNQLDQYITDIPPKQIRTRFGNESFVEWFNKVEKETPKLLFNLINDNPLNTPITNEVPIIYNEISTYLQNSWGDKQRIDYGSGHELNFICFLLCLVKIKFIKREEYELLVLIIFNKYLNMMRRLQESYWLEPAGSHGVWGLDDYHFLPFLFGSSQLIEHKYIRPKSIRNDEIVNSSFSDEYMYLGCIRFIGKVKSGGSLLEHSPMLVDISGVKNWSKVNEGMIKMFKSEVLGKLPIMQHMFFASIIQYIDNPDIIETDEEINQRKPIVTHSFSSCGCINRVPSMFAVANTDKILASTSTTTNNNNNNITSGDHCNDNEQQCSETHNHDHNHNHNHNHNHPPPPPQQQRSYFPLD.

A compositionally biased stretch (low complexity) spans 412 to 424; it reads STTTNNNNNNITS. Residues 412-468 form a disordered region; sequence STTTNNNNNNITSGDHCNDNEQQCSETHNHDHNHNHNHNHNHPPPPPQQQRSYFPLD.

This sequence belongs to the PTPA-type PPIase family.

The protein resides in the cytoplasm. The catalysed reaction is [protein]-peptidylproline (omega=180) = [protein]-peptidylproline (omega=0). PPIases accelerate the folding of proteins. It catalyzes the cis-trans isomerization of proline imidic peptide bonds in oligopeptides. Acts as a regulatory subunit for PP2A-like phosphatases modulating their activity or substrate specificity, probably by inducing a conformational change in the catalytic subunit, a direct target of the PPIase. The polypeptide is Probable serine/threonine-protein phosphatase 2A activator 2 (ppp2r4B) (Dictyostelium discoideum (Social amoeba)).